A 524-amino-acid chain; its full sequence is Anthranilate synthase component 1 (524 aa).

Polar residues predominate over residues Met1–Thr16. The tract at residues Met1 to Glu25 is disordered. L-tryptophan-binding positions include Ser74 and Pro298–Met300. Residue Gly339–Thr340 participates in chorismate binding. Lys355 participates in a covalent cross-link: Isoglutamyl lysine isopeptide (Lys-Gln) (interchain with Q-Cter in protein Pup). Glu366 provides a ligand contact to Mg(2+). Chorismate is bound by residues Tyr454, Arg474, Gly488–Gly490, and Gly490. Glu503 lines the Mg(2+) pocket.

This sequence belongs to the anthranilate synthase component I family. As to quaternary structure, heterotetramer consisting of two non-identical subunits: a beta subunit (TrpG) and a large alpha subunit (TrpE). The cofactor is Mg(2+).

The catalysed reaction is chorismate + L-glutamine = anthranilate + pyruvate + L-glutamate + H(+). The protein operates within amino-acid biosynthesis; L-tryptophan biosynthesis; L-tryptophan from chorismate: step 1/5. Feedback inhibited by tryptophan. Its function is as follows. Part of a heterotetrameric complex that catalyzes the two-step biosynthesis of anthranilate, an intermediate in the biosynthesis of L-tryptophan. In the first step, the glutamine-binding beta subunit (TrpG) of anthranilate synthase (AS) provides the glutamine amidotransferase activity which generates ammonia as a substrate that, along with chorismate, is used in the second step, catalyzed by the large alpha subunit of AS (TrpE) to produce anthranilate. In the absence of TrpG, TrpE can synthesize anthranilate directly from chorismate and high concentrations of ammonia. The chain is Anthranilate synthase component 1 (trpE) from Mycolicibacterium smegmatis (strain ATCC 700084 / mc(2)155) (Mycobacterium smegmatis).